A 235-amino-acid polypeptide reads, in one-letter code: Fibrillarin-like rRNA/tRNA 2'-O-methyltransferase (235 aa).

S-adenosyl-L-methionine contacts are provided by residues 91–92 (TT), 110–111 (EF), 137–138 (DA), and 157–160 (DVAQ).

It belongs to the methyltransferase superfamily. Fibrillarin family. As to quaternary structure, interacts with nop5. Component of box C/D small ribonucleoprotein (sRNP) particles that contain rpl7ae, FlpA and nop5, plus a guide RNA.

Its function is as follows. Involved in pre-rRNA and tRNA processing. Utilizes the methyl donor S-adenosyl-L-methionine to catalyze the site-specific 2'-hydroxyl methylation of ribose moieties in rRNA and tRNA. Site specificity is provided by a guide RNA that base pairs with the substrate. Methylation occurs at a characteristic distance from the sequence involved in base pairing with the guide RNA. This chain is Fibrillarin-like rRNA/tRNA 2'-O-methyltransferase, found in Pyrobaculum aerophilum (strain ATCC 51768 / DSM 7523 / JCM 9630 / CIP 104966 / NBRC 100827 / IM2).